The primary structure comprises 535 residues: Probable bifunctional tRNA threonylcarbamoyladenosine biosynthesis protein (535 aa).

A kae1 region spans residues 1–323 (MICLGLEGTA…YRTDMVEVNW (323 aa)). Fe cation-binding residues include histidine 106, histidine 110, and tyrosine 127. Residues 127–131 (YVSGG), aspartate 159, glycine 172, glutamate 176, and asparagine 256 contribute to the L-threonylcarbamoyladenylate site. Aspartate 284 is a Fe cation binding site. The Protein kinase domain occupies 333–535 (KIPEHLIGKG…DVERRARYVE (203 aa)). ATP contacts are provided by residues 339-347 (IGKGAEADI) and lysine 360. Catalysis depends on aspartate 451, which acts as the Proton acceptor; for kinase activity.

It in the N-terminal section; belongs to the KAE1 / TsaD family. This sequence in the C-terminal section; belongs to the protein kinase superfamily. Tyr protein kinase family. BUD32 subfamily. In terms of assembly, component of the KEOPS complex that consists of Kae1, Bud32, Cgi121 and Pcc1; the whole complex dimerizes. Fe(2+) is required as a cofactor.

Its subcellular location is the cytoplasm. The catalysed reaction is L-seryl-[protein] + ATP = O-phospho-L-seryl-[protein] + ADP + H(+). The enzyme catalyses L-threonyl-[protein] + ATP = O-phospho-L-threonyl-[protein] + ADP + H(+). It catalyses the reaction L-threonylcarbamoyladenylate + adenosine(37) in tRNA = N(6)-L-threonylcarbamoyladenosine(37) in tRNA + AMP + H(+). Activity provided by the Kae1 region seems to be regulated via phosphorylation by the protein kinase Bud32, which is itself activated by Cgi121. Functionally, required for the formation of a threonylcarbamoyl group on adenosine at position 37 (t(6)A37) in tRNAs that read codons beginning with adenine. Is a component of the KEOPS complex that is probably involved in the transfer of the threonylcarbamoyl moiety of threonylcarbamoyl-AMP (TC-AMP) to the N6 group of A37. The Kae1 domain likely plays a direct catalytic role in this reaction. The Bud32 domain probably displays kinase activity that regulates Kae1 function. In vitro, exhibits low ATPase activity, but does not bind DNA and does not have endonuclease activity. The polypeptide is Probable bifunctional tRNA threonylcarbamoyladenosine biosynthesis protein (Methanocaldococcus jannaschii (strain ATCC 43067 / DSM 2661 / JAL-1 / JCM 10045 / NBRC 100440) (Methanococcus jannaschii)).